Consider the following 359-residue polypeptide: Threonine dehydratase biosynthetic, chloroplastic (359 aa).

2 ACT-like domains span residues 184–256 and 278–349; these read ALLA…NFSH and IFGE…LDNS.

Belongs to the serine/threonine dehydratase family. Homotetramer. Requires pyridoxal 5'-phosphate as cofactor. As to expression, floral buds of untreated plants. After ABA treatment or mechanical wounding is mostly accumulated in leaves, to a lesser extent in stems, but not in roots. Expressed in anthers, carpel leaves, pith cells, sepals and petals. Not expressed in stomium, vascular bundles, epidermal cells or pollen mother cells.

It is found in the plastid. Its subcellular location is the chloroplast. It catalyses the reaction L-threonine = 2-oxobutanoate + NH4(+). It participates in amino-acid biosynthesis; L-isoleucine biosynthesis; 2-oxobutanoate from L-threonine: step 1/1. The polypeptide is Threonine dehydratase biosynthetic, chloroplastic (Solanum tuberosum (Potato)).